The primary structure comprises 492 residues: Linolenate hydroperoxide lyase, chloroplastic (492 aa).

Residues 1-33 (MLLRTMAATSPRPPPSTSLTSQQPPSPPSQLPL) are disordered. Residues 1–34 (MLLRTMAATSPRPPPSTSLTSQQPPSPPSQLPLR) constitute a chloroplast transit peptide. Cys-454 provides a ligand contact to heme.

Belongs to the cytochrome P450 family. The cofactor is heme. In terms of tissue distribution, expressed in roots, leaves, flowers and siliques.

The protein localises to the plastid. The protein resides in the chloroplast. Functionally, catalyzes the conversion of (9Z,11E,15Z)-(13S)-hydroperoxyoctadeca-9,11,15-trienoate to (9Z)-12-oxo-dodec-9-enoate and cis-3-hexenal. Possesses low activity toward (9Z,11E)-(13S)-13-hydroperoxyoctadeca-9,11-dienoate. Required for the synthesis of the green leaf volatiles (GLVs) hexanal and trans-2-hexenal. The chain is Linolenate hydroperoxide lyase, chloroplastic from Arabidopsis thaliana (Mouse-ear cress).